A 362-amino-acid polypeptide reads, in one-letter code: Putative lipoprotein YdaJ (362 aa).

Positions 1–20 are cleaved as a signal peptide; that stretch reads MRHVLIAVILFFLSIGLSAG. C21 carries N-palmitoyl cysteine lipidation. The S-diacylglycerol cysteine moiety is linked to residue C21.

It localises to the cell membrane. This Bacillus subtilis (strain 168) protein is Putative lipoprotein YdaJ (ydaJ).